Consider the following 527-residue polypeptide: Acid-sensing ion channel 1 (527 aa).

The Cytoplasmic segment spans residues methionine 1–leucine 49. Residues cysteine 50–leucine 71 traverse the membrane as a helical segment. Residues tyrosine 72–alanine 424 are Extracellular-facing. Cystine bridges form between cysteine 94/cysteine 195, cysteine 173/cysteine 180, cysteine 291/cysteine 366, cysteine 309/cysteine 362, cysteine 313/cysteine 360, cysteine 322/cysteine 344, and cysteine 324/cysteine 336. 2 N-linked (GlcNAc...) asparagine glycosylation sites follow: asparagine 367 and asparagine 394. The chain crosses the membrane as a discontinuously helical span at residues tyrosine 425–aspartate 454. The short motif at glycine 443–serine 445 is the GAS motif; ion selectivity filter element. At tyrosine 455 to cysteine 527 the chain is on the cytoplasmic side.

Belongs to the amiloride-sensitive sodium channel (TC 1.A.6) family. ASIC1 subfamily. In terms of assembly, homotrimer. Heterotrimer; with other ASIC proteins producing channel with different properties.

The protein resides in the cell membrane. It is found in the postsynaptic cell membrane. It localises to the cell projection. Its subcellular location is the dendrite. The catalysed reaction is Na(+)(in) = Na(+)(out). The enzyme catalyses Li(+)(in) = Li(+)(out). It catalyses the reaction K(+)(in) = K(+)(out). It carries out the reaction Ca(2+)(in) = Ca(2+)(out). Inhibited by the diuretic drug amiloride. Inhibited by Cs(1+) ions. Inhibited by the spider venom psalmotoxin-1; this locks the channel into its desensitized conformation. Channel activity is increased by the heterodimeric snake venom neurotoxin composed of MitTx-alpha and MitTx-beta; this slows channel closure and increases the magnitude of the steady-state current that is triggered by low pH. Forms voltage-independent, pH-gated trimeric sodium channels that act as postsynaptic excitatory receptors in the nervous system, playing a crucial role in regulating synaptic plasticity, learning, and memory. Upon extracellular pH drop this channel elicits transient, fast activating, and completely desensitizing inward currents. Displays high selectivity for sodium ions but can also permit the permeation of other cations. Regulates more or less directly intracellular calcium concentration and CaMKII phosphorylation, and thereby the density of dendritic spines. Modulates neuronal activity in the circuits underlying innate fear. In Gallus gallus (Chicken), this protein is Acid-sensing ion channel 1.